The sequence spans 303 residues: Ornithine carbamoyltransferase (303 aa).

Residues 52–55 (STRT), Gln79, Arg103, and 130–133 (HPCQ) contribute to the carbamoyl phosphate site. Residues Asn161, Asp222, and 226-227 (SM) each bind L-ornithine. Carbamoyl phosphate is bound by residues 262–263 (CL) and Arg290.

Belongs to the aspartate/ornithine carbamoyltransferase superfamily. OTCase family.

Its subcellular location is the cytoplasm. It carries out the reaction carbamoyl phosphate + L-ornithine = L-citrulline + phosphate + H(+). It participates in amino-acid biosynthesis; L-arginine biosynthesis; L-arginine from L-ornithine and carbamoyl phosphate: step 1/3. Its function is as follows. Reversibly catalyzes the transfer of the carbamoyl group from carbamoyl phosphate (CP) to the N(epsilon) atom of ornithine (ORN) to produce L-citrulline. The polypeptide is Ornithine carbamoyltransferase (Geobacter sulfurreducens (strain ATCC 51573 / DSM 12127 / PCA)).